A 108-amino-acid polypeptide reads, in one-letter code: Large ribosomal subunit protein uL24 (108 aa).

Belongs to the universal ribosomal protein uL24 family. Part of the 50S ribosomal subunit.

Its function is as follows. One of two assembly initiator proteins, it binds directly to the 5'-end of the 23S rRNA, where it nucleates assembly of the 50S subunit. In terms of biological role, one of the proteins that surrounds the polypeptide exit tunnel on the outside of the subunit. The protein is Large ribosomal subunit protein uL24 of Desulfosudis oleivorans (strain DSM 6200 / JCM 39069 / Hxd3) (Desulfococcus oleovorans).